The sequence spans 801 residues: Interleukin-4 receptor subunit alpha (801 aa).

An N-terminal signal peptide occupies residues 1–25; sequence MGWLCTKFLSSVSCLILLWVTGSGG. Residues 26 to 232 are Extracellular-facing; that stretch reads IKVLGDPTCF…NHFQLPLLQR (207 aa). The cysteines at positions 34 and 44 are disulfide-linked. N71 carries an N-linked (GlcNAc...) asparagine glycan. C74 and C86 are joined by a disulfide. One can recognise a Fibronectin type-III domain in the interval 125 to 223; sequence APDNLTLHTN…EWSPSITWYN (99 aa). 3 N-linked (GlcNAc...) asparagine glycosylation sites follow: N128, N134, and N162. The residue at position 164 (S164) is a Phosphoserine. An N-linked (GlcNAc...) asparagine glycan is attached at N176. The short motif at 212-216 is the WSXWS motif element; the sequence is WSEWS. Residues 233-256 form a helical membrane-spanning segment; the sequence is LPLGVSISCICILLFCLTCYFSII. Topologically, residues 257–801 are cytoplasmic; the sequence is KIKKIWWDQI…PVGTLGVTVS (545 aa). The short motif at 262–270 is the Box 1 motif element; the sequence is WWDQIPTPA. The interval 424–476 is disordered; the sequence is VGQSSMAESSSLLPSESGQASTSWACFPTGPSETTCQVTGQQPPHPDPERATG. Over residues 426-444 the composition is skewed to low complexity; the sequence is QSSMAESSSLLPSESGQAS. The segment at 439–549 is required for IRS1 activation and IL4-induced cell growth; the sequence is ESGQASTSWA…ESWEQILHMS (111 aa). A compositionally biased stretch (polar residues) spans 454–465; it reads PSETTCQVTGQQ. Y492 is subject to Phosphotyrosine. Positions 493-515 are disordered; the sequence is RSFSDFSSPAPNPGELASEQKQA. Positions 549–644 are required for IL4-induced gene expression; it reads SVLQHGTAGS…NSMPLFTFGL (96 aa). Y566, Y594, and Y622 each carry phosphotyrosine. The ITIM motif motif lies at 698-703; it reads IVYSSL. The segment at 767 to 801 is disordered; that stretch reads RTPSNLSGVGKGPGHSPVPSQTTEVPVGTLGVTVS.

Belongs to the type I cytokine receptor family. Type 4 subfamily. As to quaternary structure, the functional IL4 receptor is formed by initial binding of IL4 to IL4R. Subsequent recruitment to the complex of the common gamma chain, in immune cells, creates a type I receptor and, in non-immune cells, of IL13RA1 forms a type II receptor. IL4R can also interact with the IL13/IL13RA1 complex to form a similar type II receptor. Interacts with PIK3C3. Interacts with the SH2-containing phosphatases, PTPN6/SHIP1, PTPN11/SHIP2 and INPP5D/SHIP. Interacts with JAK1 through a Box 1-containing region; inhibited by SOCS5. Interacts with SOCS5; inhibits IL4 signaling. Interacts with JAK3. Interacts with CLM1. Interacts with IL13RA2. Post-translationally, on IL4 binding, phosphorylated on C-terminal tyrosine residues. In terms of tissue distribution, isoform 2 is expressed in kidney, spleen, lung and liver.

The protein resides in the cell membrane. The protein localises to the secreted. Its function is as follows. Receptor for both interleukin 4 and interleukin 13. Couples to the JAK1/2/3-STAT6 pathway. The IL4 response is involved in promoting Th2 differentiation. The IL4/IL13 responses are involved in regulating IgE production and, chemokine and mucus production at sites of allergic inflammation. In certain cell types, can signal through activation of insulin receptor substrates, IRS1/IRS2. In terms of biological role, isoform 2 (soluble form) inhibits IL4-induced spleen cell proliferation. This is Interleukin-4 receptor subunit alpha (Il4r) from Rattus norvegicus (Rat).